A 366-amino-acid chain; its full sequence is Putative RING-H2 finger protein ATL21C (366 aa).

Positions 1–23 are cleaved as a signal peptide; sequence MTFSKQLFPFVFFLLFLVSLRHA. The helical transmembrane segment at 243–263 threads the bilayer; it reads LVLVISLSAVTVFVFPTCIAI. Residues 320–362 form an RING-type; atypical zinc finger; sequence CPICLSEYASKETVRFIPECDHCFHVECIDVWLKIHGSCPLCR.

This sequence belongs to the RING-type zinc finger family. ATL subfamily.

The protein localises to the membrane. The enzyme catalyses S-ubiquitinyl-[E2 ubiquitin-conjugating enzyme]-L-cysteine + [acceptor protein]-L-lysine = [E2 ubiquitin-conjugating enzyme]-L-cysteine + N(6)-ubiquitinyl-[acceptor protein]-L-lysine.. The protein operates within protein modification; protein ubiquitination. This is Putative RING-H2 finger protein ATL21C (ATL21C) from Arabidopsis thaliana (Mouse-ear cress).